A 350-amino-acid chain; its full sequence is D-alanine--D-alanine ligase (350 aa).

The region spanning 138–346 (KSAFSSAGLS…LEQLVHKLIQ (209 aa)) is the ATP-grasp domain. Residue 173–228 (ERELNYPCFVKPANLGSSVGISKVRSRQELEAGLEQAAALDPRLVVEQGVNAREVE) coordinates ATP. Positions 299, 313, and 315 each coordinate Mg(2+).

Belongs to the D-alanine--D-alanine ligase family. The cofactor is Mg(2+). Mn(2+) serves as cofactor.

Its subcellular location is the cytoplasm. The catalysed reaction is 2 D-alanine + ATP = D-alanyl-D-alanine + ADP + phosphate + H(+). It participates in cell wall biogenesis; peptidoglycan biosynthesis. Functionally, cell wall formation. The polypeptide is D-alanine--D-alanine ligase (Synechococcus sp. (strain CC9605)).